The primary structure comprises 390 residues: 8-amino-7-oxononanoate synthase (390 aa).

Arg19 provides a ligand contact to substrate. Residue 106-107 (GY) coordinates pyridoxal 5'-phosphate. A substrate-binding site is contributed by His131. Pyridoxal 5'-phosphate contacts are provided by Ser176, His204, and Thr233. N6-(pyridoxal phosphate)lysine is present on Lys236. Thr350 serves as a coordination point for substrate.

This sequence belongs to the class-II pyridoxal-phosphate-dependent aminotransferase family. BioF subfamily. Homodimer. Pyridoxal 5'-phosphate is required as a cofactor.

It catalyses the reaction 6-carboxyhexanoyl-[ACP] + L-alanine + H(+) = (8S)-8-amino-7-oxononanoate + holo-[ACP] + CO2. Its pathway is cofactor biosynthesis; biotin biosynthesis. In terms of biological role, catalyzes the decarboxylative condensation of pimeloyl-[acyl-carrier protein] and L-alanine to produce 8-amino-7-oxononanoate (AON), [acyl-carrier protein], and carbon dioxide. This Pseudomonas putida (strain W619) protein is 8-amino-7-oxononanoate synthase.